A 753-amino-acid chain; its full sequence is 5-methyltetrahydropteroyltriglutamate--homocysteine methyltransferase (753 aa).

5-methyltetrahydropteroyltri-L-glutamate contacts are provided by residues 17-20 (RELK) and Lys-117. L-homocysteine-binding positions include 431–433 (IGS) and Glu-484. L-methionine contacts are provided by residues 431-433 (IGS) and Glu-484. 5-methyltetrahydropteroyltri-L-glutamate-binding positions include 515–516 (RC) and Trp-561. Asp-599 provides a ligand contact to L-homocysteine. An L-methionine-binding site is contributed by Asp-599. Glu-605 provides a ligand contact to 5-methyltetrahydropteroyltri-L-glutamate. Zn(2+)-binding residues include His-641, Cys-643, and Glu-665. The active-site Proton donor is His-694. Cys-726 serves as a coordination point for Zn(2+).

It belongs to the vitamin-B12 independent methionine synthase family. The cofactor is Zn(2+).

It carries out the reaction 5-methyltetrahydropteroyltri-L-glutamate + L-homocysteine = tetrahydropteroyltri-L-glutamate + L-methionine. The protein operates within amino-acid biosynthesis; L-methionine biosynthesis via de novo pathway; L-methionine from L-homocysteine (MetE route): step 1/1. Its function is as follows. Catalyzes the transfer of a methyl group from 5-methyltetrahydrofolate to homocysteine resulting in methionine formation. In Escherichia coli O9:H4 (strain HS), this protein is 5-methyltetrahydropteroyltriglutamate--homocysteine methyltransferase.